The primary structure comprises 138 residues: Translation initiation factor 5A (138 aa).

Hypusine is present on Lys37.

The protein belongs to the eIF-5A family.

The protein resides in the cytoplasm. Functions by promoting the formation of the first peptide bond. The polypeptide is Translation initiation factor 5A (eIF5A) (Thermococcus sibiricus (strain DSM 12597 / MM 739)).